The chain runs to 308 residues: Isoflavone reductase homolog (308 aa).

NADP(+) is bound by residues 11–17, arginine 36, and lysine 45; that span reads GGTGYIG. Lysine 133 serves as the catalytic Proton acceptor. Arginine 137 provides a ligand contact to NADP(+).

The protein belongs to the NmrA-type oxidoreductase family. Isoflavone reductase subfamily.

It localises to the cytoplasm. The chain is Isoflavone reductase homolog from Solanum tuberosum (Potato).